The chain runs to 507 residues: Glycogen synthase (507 aa).

Residue lysine 15 participates in ADP-alpha-D-glucose binding.

This sequence belongs to the glycosyltransferase 1 family. Bacterial/plant glycogen synthase subfamily.

The enzyme catalyses [(1-&gt;4)-alpha-D-glucosyl](n) + ADP-alpha-D-glucose = [(1-&gt;4)-alpha-D-glucosyl](n+1) + ADP + H(+). Its pathway is glycan biosynthesis; glycogen biosynthesis. Its function is as follows. Synthesizes alpha-1,4-glucan chains using ADP-glucose. This Rhodopirellula baltica (strain DSM 10527 / NCIMB 13988 / SH1) protein is Glycogen synthase.